Consider the following 481-residue polypeptide: Guanine nucleotide exchange factor C9orf72 (481 aa).

A uDENN C9ORF72-type domain is found at 23-194 (SPLLAATFAY…ELLSSMKSHS (172 aa)). A cDENN C9ORF72-type domain is found at 200-343 (DIADTVLNDD…SELTAFWRAT (144 aa)). Residues 370 to 464 (VLHRDTLVKA…IKPGLHSFIF (95 aa)) enclose the dDENN C9ORF72-type domain. Residues 461 to 481 (SFIFGRPFYTSVQERDVLMTF) are required for the homodimerization of the C9orf72-SMCR8 complex.

Component of the C9orf72-SMCR8 complex, at least composed of C9orf72, SMCR8 and WDR41. The complex is formed of two protomers, each individually consisting of one molecule each of C9orf72, SMCR8 and WDR41. The protomers homodimerize via an interaction between C9orf72 (via C-terminus) and SMCR8 (via N-terminus). Within each protomer SMCR8 (via DENN domain) acts as a bridging protein between WDR41 (via C-terminus and N-terminus) and C9orf72 (via C-terminus). The C9orf72-SMCR8 complex associates with the ULK1/ATG1 kinase complex. Interacts with ULK1/ATG1 kinase complex members ULK1, ATG13 and RB1CC1. Interacts with SMCR8; the interaction is direct. Interacts with HNRNPA1, HNRNPA2B1 and UBQLN2. Interacts with small Rab GTPase RAB1A; the interaction mediates recruitment of RAB1A to the ULK1/ATG1 kinase complex. Also interacts with small Rab GTPase RAB7A. Interacts with cofilin. Interacts with GTP-binding proteins ARF1 and ARF6. Interacts with the DLG4/PSD-95. Interacts with CARM1 (via PH domain-like fold). Interacts with RAB39A and RAB39B (in GDP-bound forms); functions as GEF for RAB39A and RAB39B. In terms of tissue distribution, both isoforms are widely expressed, including kidney, lung, liver, heart, testis and several brain regions, such as cerebellum. Also expressed in the frontal cortex and in lymphoblasts (at protein level).

Its subcellular location is the cytoplasm. The protein localises to the nucleus. It localises to the P-body. It is found in the stress granule. The protein resides in the endosome. Its subcellular location is the lysosome. The protein localises to the cytoplasmic vesicle. It localises to the autophagosome. It is found in the autolysosome. The protein resides in the secreted. Its subcellular location is the cell projection. The protein localises to the axon. It localises to the growth cone. It is found in the perikaryon. The protein resides in the dendrite. Its subcellular location is the presynapse. The protein localises to the postsynapse. It localises to the nucleus membrane. Its function is as follows. Acts as a guanine-nucleotide releasing factor (GEF) for Rab GTPases by promoting the conversion of inactive RAB-GDP to the active form RAB-GTP. Acts as a GEF for RAB39A which enables HOPS-mediated autophagosome-lysosome membrane tethering and fusion in mammalian autophagy. Component of the C9orf72-SMCR8 complex where both subunits display GEF activity and that regulates autophagy. As part of the C9orf72-SMCR8-WDR41 (CSW) complex, functions as GEF for RAB8A and RAB39B, thereby promoting autophagosome maturation. As part of the C9orf72-SMCR8 complex, also functions as GTPase activating protein (GAP) for RAB8A and RAB11A in vitro. The C9orf72-SMCR8 complex also acts as a regulator of autophagy initiation by interacting with the ULK1/ATG1 kinase complex and modulating its protein kinase activity. Promotes initiation of autophagy by regulating the RAB1A-dependent trafficking of the ULK1/ATG1 kinase complex to the phagophore which leads to autophagosome formation. Acts as a regulator of mTORC1 signaling by promoting phosphorylation of mTORC1 substrates. Plays a role in endosomal trafficking. May be involved in regulating the maturation of phagosomes to lysosomes. Promotes the lysosomal localization and lysosome-mediated degradation of CARM1 which leads to inhibition of starvation-induced lipid metabolism. Regulates actin dynamics in motor neurons by inhibiting the GTP-binding activity of ARF6, leading to ARF6 inactivation. This reduces the activity of the LIMK1 and LIMK2 kinases which are responsible for phosphorylation and inactivation of cofilin, leading to CFL1/cofilin activation. Positively regulates axon extension and axon growth cone size in spinal motor neurons. Required for SMCR8 protein expression and localization at pre- and post-synaptic compartments in the forebrain, also regulates protein abundance of RAB3A and GRIA1/GLUR1 in post-synaptic compartments in the forebrain and hippocampus. Plays a role within the hematopoietic system in restricting inflammation and the development of autoimmunity. Regulates stress granule assembly in response to cellular stress. Functionally, does not play a role in regulation of stress granule assembly in response to cellular stress. This Homo sapiens (Human) protein is Guanine nucleotide exchange factor C9orf72.